A 522-amino-acid chain; its full sequence is 2-isopropylmalate synthase (522 aa).

The Pyruvate carboxyltransferase domain maps to 5–267 (VIIFDTTLRD…ETGINAKEIH (263 aa)). The Mn(2+) site is built by Asp14, His202, His204, and Asn238. The interval 392–522 (QLQQLVVQSD…MQKNRELGGV (131 aa)) is regulatory domain.

Belongs to the alpha-IPM synthase/homocitrate synthase family. LeuA type 1 subfamily. As to quaternary structure, homodimer. Requires Mn(2+) as cofactor.

It is found in the cytoplasm. The enzyme catalyses 3-methyl-2-oxobutanoate + acetyl-CoA + H2O = (2S)-2-isopropylmalate + CoA + H(+). The protein operates within amino-acid biosynthesis; L-leucine biosynthesis; L-leucine from 3-methyl-2-oxobutanoate: step 1/4. Functionally, catalyzes the condensation of the acetyl group of acetyl-CoA with 3-methyl-2-oxobutanoate (2-ketoisovalerate) to form 3-carboxy-3-hydroxy-4-methylpentanoate (2-isopropylmalate). The chain is 2-isopropylmalate synthase from Shewanella baltica (strain OS223).